The chain runs to 453 residues: Aspartic proteinase PCS1 (453 aa).

Positions 1 to 18 (MFSRFHALFLLLVLSVRT) are cleaved as a signal peptide. Positions 19–57 (YKCVSSSSSSSSSFSFSSFSSSSSSQTLVLPLKTRITPT) are cleaved as a propeptide — activation peptide. Residues Asn-70 and Asn-85 are each glycosylated (N-linked (GlcNAc...) asparagine). Residues 73–438 (LTVTLTVGTP…DLQRSRIGLA (366 aa)) enclose the Peptidase A1 domain. Asp-91 is an active-site residue. Asn-102, Asn-175, Asn-178, and Asn-243 each carry an N-linked (GlcNAc...) asparagine glycan. Residue Asp-304 is part of the active site. 2 N-linked (GlcNAc...) asparagine glycosylation sites follow: Asn-326 and Asn-395.

This sequence belongs to the peptidase A1 family. As to expression, expressed specifically in developing gametophytes and developing seeds.

It localises to the endoplasmic reticulum. Embryo-specific aspartic protease that limits programmed cell death during reproductive development. Possesses peptidase activity toward casein in vitro. This chain is Aspartic proteinase PCS1 (PCS1), found in Arabidopsis thaliana (Mouse-ear cress).